The sequence spans 230 residues: NAD(P)H-hydrate epimerase (230 aa).

Residues Ala11–Leu218 enclose the YjeF N-terminal domain. Asn61–Asp65 lines the (6S)-NADPHX pocket. Positions 62 and 126 each coordinate K(+). Residues Gly130 to Pro136 and Asp159 contribute to the (6S)-NADPHX site. A K(+)-binding site is contributed by Ser162.

It belongs to the NnrE/AIBP family. Requires K(+) as cofactor.

The enzyme catalyses (6R)-NADHX = (6S)-NADHX. It catalyses the reaction (6R)-NADPHX = (6S)-NADPHX. Its function is as follows. Catalyzes the epimerization of the S- and R-forms of NAD(P)HX, a damaged form of NAD(P)H that is a result of enzymatic or heat-dependent hydration. This is a prerequisite for the S-specific NAD(P)H-hydrate dehydratase to allow the repair of both epimers of NAD(P)HX. The chain is NAD(P)H-hydrate epimerase from Drosophila melanogaster (Fruit fly).